The primary structure comprises 157 residues: 2-C-methyl-D-erythritol 2,4-cyclodiphosphate synthase (157 aa).

Residues Asp8 and His10 each coordinate a divalent metal cation. 4-CDP-2-C-methyl-D-erythritol 2-phosphate contacts are provided by residues Asp8–His10 and His34–Ser35. His42 provides a ligand contact to a divalent metal cation. 4-CDP-2-C-methyl-D-erythritol 2-phosphate is bound by residues Asp56 to Gly58, Phe61 to Asp65, Thr132 to Glu135, Phe139, and Arg142.

It belongs to the IspF family. As to quaternary structure, homotrimer. Requires a divalent metal cation as cofactor.

The enzyme catalyses 4-CDP-2-C-methyl-D-erythritol 2-phosphate = 2-C-methyl-D-erythritol 2,4-cyclic diphosphate + CMP. Its pathway is isoprenoid biosynthesis; isopentenyl diphosphate biosynthesis via DXP pathway; isopentenyl diphosphate from 1-deoxy-D-xylulose 5-phosphate: step 4/6. Involved in the biosynthesis of isopentenyl diphosphate (IPP) and dimethylallyl diphosphate (DMAPP), two major building blocks of isoprenoid compounds. Catalyzes the conversion of 4-diphosphocytidyl-2-C-methyl-D-erythritol 2-phosphate (CDP-ME2P) to 2-C-methyl-D-erythritol 2,4-cyclodiphosphate (ME-CPP) with a corresponding release of cytidine 5-monophosphate (CMP). The polypeptide is 2-C-methyl-D-erythritol 2,4-cyclodiphosphate synthase (Geobacter metallireducens (strain ATCC 53774 / DSM 7210 / GS-15)).